The following is a 482-amino-acid chain: Cytochrome c-552 (482 aa).

The first 26 residues, 1-26 (MIKVSNALQRILIGAALALFGGGAQA), serve as a signal peptide directing secretion. Position 98 (histidine 98) interacts with heme c. 3 residues coordinate heme: cysteine 126, cysteine 129, and lysine 130. Heme c contacts are provided by cysteine 164, cysteine 167, histidine 168, cysteine 213, cysteine 216, and histidine 217. Residues glutamate 219, tyrosine 220, lysine 265, and glutamine 267 each contribute to the Ca(2+) site. Position 220 (tyrosine 220) interacts with substrate. Histidine 268 contributes to the substrate binding site. Heme c-binding residues include histidine 279, cysteine 286, cysteine 289, histidine 290, histidine 305, cysteine 318, cysteine 321, histidine 322, and histidine 397.

It belongs to the cytochrome c-552 family. Ca(2+) is required as a cofactor. The cofactor is heme c.

The protein localises to the periplasm. It carries out the reaction 6 Fe(III)-[cytochrome c] + NH4(+) + 2 H2O = 6 Fe(II)-[cytochrome c] + nitrite + 8 H(+). The protein operates within nitrogen metabolism; nitrate reduction (assimilation). Its function is as follows. Catalyzes the reduction of nitrite to ammonia, consuming six electrons in the process. The chain is Cytochrome c-552 from Edwardsiella ictaluri (strain 93-146).